Here is a 72-residue protein sequence, read N- to C-terminus: Bowman-Birk type trypsin inhibitor (72 aa).

7 disulfide bridges follow: Cys12–Cys66, Cys13–Cys28, Cys16–Cys62, Cys18–Cys26, Cys36–Cys43, Cys40–Cys55, and Cys45–Cys53.

The protein belongs to the Bowman-Birk serine protease inhibitor family.

This Vigna radiata var. radiata (Mung bean) protein is Bowman-Birk type trypsin inhibitor.